We begin with the raw amino-acid sequence, 284 residues long: D-tagatose-1,6-bisphosphate aldolase subunit GatY (284 aa).

Catalysis depends on D82, which acts as the Proton donor. 2 residues coordinate Zn(2+): H83 and H180. Dihydroxyacetone phosphate is bound at residue G181. H208 lines the Zn(2+) pocket. Residues 209 to 211 (GAS) and 230 to 233 (NVAT) contribute to the dihydroxyacetone phosphate site.

This sequence belongs to the class II fructose-bisphosphate aldolase family. TagBP aldolase GatY subfamily. In terms of assembly, forms a complex with GatZ. Requires Zn(2+) as cofactor.

It carries out the reaction D-tagatofuranose 1,6-bisphosphate = D-glyceraldehyde 3-phosphate + dihydroxyacetone phosphate. It functions in the pathway carbohydrate metabolism; D-tagatose 6-phosphate degradation; D-glyceraldehyde 3-phosphate and glycerone phosphate from D-tagatose 6-phosphate: step 2/2. Catalytic subunit of the tagatose-1,6-bisphosphate aldolase GatYZ, which catalyzes the reversible aldol condensation of dihydroxyacetone phosphate (DHAP or glycerone-phosphate) with glyceraldehyde 3-phosphate (G3P) to produce tagatose 1,6-bisphosphate (TBP). Requires GatZ subunit for full activity and stability. Is involved in the catabolism of galactitol. The polypeptide is D-tagatose-1,6-bisphosphate aldolase subunit GatY (Shigella flexneri).